The primary structure comprises 217 residues: Monomethylamine corrinoid protein 2 (217 aa).

A B12-binding N-terminal domain is found at 1 to 91 (MTNTEIFEKL…ELEKSKVEGE (91 aa)). In terms of domain architecture, B12-binding spans 93–217 (TGLAITFVAE…AAKVALNIMK (125 aa)). His106 lines the methylcob(III)alamin pocket.

Belongs to the methylamine corrinoid protein family. As to quaternary structure, can form a complex with MtmB.

Its pathway is one-carbon metabolism; methanogenesis from methylamine. Functionally, acts as a methyl group carrier between MtmB and MtbA. This Methanosarcina acetivorans (strain ATCC 35395 / DSM 2834 / JCM 12185 / C2A) protein is Monomethylamine corrinoid protein 2 (mtmC2).